The primary structure comprises 234 residues: Segregation and condensation protein A (234 aa).

The protein belongs to the ScpA family. Component of a cohesin-like complex composed of ScpA, ScpB and the Smc homodimer, in which ScpA and ScpB bind to the head domain of Smc. The presence of the three proteins is required for the association of the complex with DNA.

It is found in the cytoplasm. Participates in chromosomal partition during cell division. May act via the formation of a condensin-like complex containing Smc and ScpB that pull DNA away from mid-cell into both cell halves. The polypeptide is Segregation and condensation protein A (Streptococcus pyogenes serotype M6 (strain ATCC BAA-946 / MGAS10394)).